Here is a 377-residue protein sequence, read N- to C-terminus: Protein ECM9 (377 aa).

Functionally, may be involved in cell wall organization and biogenesis. This is Protein ECM9 (ECM9) from Saccharomyces cerevisiae (strain ATCC 204508 / S288c) (Baker's yeast).